Consider the following 164-residue polypeptide: PTS system sorbose-specific EIIB component (164 aa).

The PTS EIIB type-4 domain occupies 1-164; it reads MIITLARVDD…AKIDEVFGKE (164 aa). H14 (pros-phosphohistidine intermediate) is an active-site residue. H14 carries the phosphohistidine; by EIIA modification.

Its subcellular location is the cytoplasm. It carries out the reaction keto-L-sorbose(out) + N(pros)-phospho-L-histidyl-[protein] = L-sorbose 1-phosphate(in) + L-histidyl-[protein]. In terms of biological role, the phosphoenolpyruvate-dependent sugar phosphotransferase system (PTS), a major carbohydrate active transport system, catalyzes the phosphorylation of incoming sugar substrates concomitant with their translocation across the cell membrane. The enzyme II SorABCD PTS system is involved in L-sorbose transport. This is PTS system sorbose-specific EIIB component from Lacticaseibacillus casei (Lactobacillus casei).